We begin with the raw amino-acid sequence, 225 residues long: Protein ZW2 (225 aa).

The 219-residue stretch at 7-225 folds into the DOG1 domain; sequence SETFASFFND…FYLRLRDLGV (219 aa).

Functionally, may be involved in the regulation of abscisic acid (ABA) sensitivity. The chain is Protein ZW2 from Arabidopsis thaliana (Mouse-ear cress).